We begin with the raw amino-acid sequence, 325 residues long: Melanocortin receptor 5 (325 aa).

Topologically, residues M1–G37 are extracellular. 4 N-linked (GlcNAc...) asparagine glycosylation sites follow: N2, N11, N15, and N28. A helical membrane pass occupies residues I38–I61. The Cytoplasmic segment spans residues V62–F73. The helical transmembrane segment at F74 to Y97 threads the bilayer. The Extracellular portion of the chain corresponds to L98–I114. A helical transmembrane segment spans residues D115 to V138. The Cytoplasmic segment spans residues D139–T155. Residues A156–I179 traverse the membrane as a helical segment. The Extracellular segment spans residues Y180–V186. The chain crosses the membrane as a helical span at residues I187–L211. Residues A212–T239 are Cytoplasmic-facing. A helical membrane pass occupies residues L240 to P265. Residues Q266–F273 are Extracellular-facing. A helical transmembrane segment spans residues M274–L297. Over R298–Y325 the chain is Cytoplasmic. 2 S-palmitoyl cysteine lipidation sites follow: C311 and C312.

This sequence belongs to the G-protein coupled receptor 1 family. In terms of tissue distribution, skin, adrenal gland, skeletal muscle, bone marrow, spleen, thymus, gonads, uterus and brain.

It is found in the cell membrane. Receptor for MSH (alpha, beta and gamma) and ACTH. The activity of this receptor is mediated by G proteins which activate adenylate cyclase. This receptor is a possible mediator of the immunomodulation properties of melanocortins. This chain is Melanocortin receptor 5 (Mc5r), found in Mus musculus (Mouse).